A 151-amino-acid chain; its full sequence is 3-hydroxyacyl-[acyl-carrier-protein] dehydratase FabZ (151 aa).

Residue H54 is part of the active site.

The protein belongs to the thioester dehydratase family. FabZ subfamily.

It is found in the cytoplasm. It catalyses the reaction a (3R)-hydroxyacyl-[ACP] = a (2E)-enoyl-[ACP] + H2O. In terms of biological role, involved in unsaturated fatty acids biosynthesis. Catalyzes the dehydration of short chain beta-hydroxyacyl-ACPs and long chain saturated and unsaturated beta-hydroxyacyl-ACPs. The protein is 3-hydroxyacyl-[acyl-carrier-protein] dehydratase FabZ of Blochmanniella floridana.